We begin with the raw amino-acid sequence, 533 residues long: MSLPYLFLDSEVTPPISLSLAFIIFMFLVKFILKTHNKNSVPVVPLPPGPSPWPIVGSLPEMWRNRPAHRWIHSLMKKLNTDIACIRLGNVHVIPVTSPEIAREFLKKNDAVFASRPVTMATKTLSSGYLTTVVGPWGDQWRKMRRVLVAEAFNPSRVHWLLGKRNEEADNLVKFLYNQCSANQNGAVVNVRIAAQFYSGSIMRKMIFNRTYFGKGREDGGPGVEEEEHVSALLTLLTYAYAFCVSDYLPWLRVFDIDGHEKKVRKAMNIVKKHQEPIVNERLQEWRDGKRNEPDDLLDVFISLKDANGQPLLSDEEIKAQTTELQLSTVDSPFNIAEWALTEMLNQPEMLKKAEEELDRVVGKKTLVQESHVPHLPYIRACAKEVMRLHPVGPFNLPHVSIADAEVAGYFIPKGSNVILSRLELGRNPRVWEEPLRFNPERHLNIAVDQQVDLEENDLRFVSFSTGRRGCMGVGLGSTIVVMLLARLLQGFSWSLPPDVDKIDFTEDQIYLKKASPLLAQAKPRLPASVYPI.

The helical transmembrane segment at 12-32 (VTPPISLSLAFIIFMFLVKFI) threads the bilayer. N209 carries an N-linked (GlcNAc...) asparagine glycan. C471 contacts heme.

It belongs to the cytochrome P450 family. The cofactor is heme. As to expression, confined to buds.

Its subcellular location is the membrane. The enzyme catalyses L-tryptophan + 2 reduced [NADPH--hemoprotein reductase] + 2 O2 = (E)-(indol-3-yl)acetaldehyde oxime + 2 oxidized [NADPH--hemoprotein reductase] + CO2 + 3 H2O + 2 H(+). Functionally, catalyzes with low efficiency E and Z isomers of indole-3-acetaldoxime from tryptophan (Trp). The chain is Tryptophan N-monooxygenase CYP79A68 from Prunus mume (Japanese apricot).